We begin with the raw amino-acid sequence, 227 residues long: MAYPLQLGLQDATSPIMEELMNFHDHTLMIVFLISSLVLYIISLMLTTKLTHTSTMDAQEVETIWTILPAAILVLIALPSLRILYMMDEINNPVLTVKTMGHQWYWSYEYTDYEDLCFDSYMIPTNDLKPGELRLLEVDNRVVLPMELPIRMLISSEDVLHSWAVPSLGLKTDAIPGRLNQATVSSNRPGLFYGQCSEICGSNHSFMPIVLEMVPLKYFENWSASMI.

At M1–S14 the chain is on the mitochondrial intermembrane side. Residues P15–M45 traverse the membrane as a helical segment. Over L46 to Q59 the chain is Mitochondrial matrix. Residues E60–M87 traverse the membrane as a helical segment. At D88–I227 the chain is on the mitochondrial intermembrane side. The Cu cation site is built by H161, C196, E198, C200, H204, and M207. Residue E198 coordinates Mg(2+). A Phosphotyrosine modification is found at Y218.

The protein belongs to the cytochrome c oxidase subunit 2 family. As to quaternary structure, component of the cytochrome c oxidase (complex IV, CIV), a multisubunit enzyme composed of 14 subunits. The complex is composed of a catalytic core of 3 subunits MT-CO1, MT-CO2 and MT-CO3, encoded in the mitochondrial DNA, and 11 supernumerary subunits COX4I, COX5A, COX5B, COX6A, COX6B, COX6C, COX7A, COX7B, COX7C, COX8 and NDUFA4, which are encoded in the nuclear genome. The complex exists as a monomer or a dimer and forms supercomplexes (SCs) in the inner mitochondrial membrane with NADH-ubiquinone oxidoreductase (complex I, CI) and ubiquinol-cytochrome c oxidoreductase (cytochrome b-c1 complex, complex III, CIII), resulting in different assemblies (supercomplex SCI(1)III(2)IV(1) and megacomplex MCI(2)III(2)IV(2)). Found in a complex with TMEM177, COA6, COX18, COX20, SCO1 and SCO2. Interacts with TMEM177 in a COX20-dependent manner. Interacts with COX20. Interacts with COX16. Requires Cu cation as cofactor.

The protein localises to the mitochondrion inner membrane. The catalysed reaction is 4 Fe(II)-[cytochrome c] + O2 + 8 H(+)(in) = 4 Fe(III)-[cytochrome c] + 2 H2O + 4 H(+)(out). Its function is as follows. Component of the cytochrome c oxidase, the last enzyme in the mitochondrial electron transport chain which drives oxidative phosphorylation. The respiratory chain contains 3 multisubunit complexes succinate dehydrogenase (complex II, CII), ubiquinol-cytochrome c oxidoreductase (cytochrome b-c1 complex, complex III, CIII) and cytochrome c oxidase (complex IV, CIV), that cooperate to transfer electrons derived from NADH and succinate to molecular oxygen, creating an electrochemical gradient over the inner membrane that drives transmembrane transport and the ATP synthase. Cytochrome c oxidase is the component of the respiratory chain that catalyzes the reduction of oxygen to water. Electrons originating from reduced cytochrome c in the intermembrane space (IMS) are transferred via the dinuclear copper A center (CU(A)) of subunit 2 and heme A of subunit 1 to the active site in subunit 1, a binuclear center (BNC) formed by heme A3 and copper B (CU(B)). The BNC reduces molecular oxygen to 2 water molecules using 4 electrons from cytochrome c in the IMS and 4 protons from the mitochondrial matrix. This is Cytochrome c oxidase subunit 2 (MT-CO2) from Micaelamys namaquensis (Namaqua rock rat).